The primary structure comprises 555 residues: Formate--tetrahydrofolate ligase (555 aa).

64–71 is a binding site for ATP; that stretch reads TKAGIGKT.

The protein belongs to the formate--tetrahydrofolate ligase family.

The catalysed reaction is (6S)-5,6,7,8-tetrahydrofolate + formate + ATP = (6R)-10-formyltetrahydrofolate + ADP + phosphate. The protein operates within one-carbon metabolism; tetrahydrofolate interconversion. The sequence is that of Formate--tetrahydrofolate ligase from Bacteroides fragilis (strain ATCC 25285 / DSM 2151 / CCUG 4856 / JCM 11019 / LMG 10263 / NCTC 9343 / Onslow / VPI 2553 / EN-2).